The sequence spans 526 residues: Amine oxidase [flavin-containing] A (526 aa).

Residue Met-1 is modified to N-acetylmethionine. Residues 1–497 (MTDLEKPSIT…HTFLERNLPS (497 aa)) lie on the Cytoplasmic side of the membrane. At Ser-383 the chain carries Phosphoserine. Cys-406 is subject to S-8alpha-FAD cysteine. The chain crosses the membrane as a helical; Anchor for type IV membrane protein span at residues 498 to 518 (VPGLLKITGFSTSVALLCFVL). Topologically, residues 519-526 (YKFKQPQS) are mitochondrial intermembrane. The interaction with membrane phospholipid headgroups stretch occupies residues 520–522 (KFK).

The protein belongs to the flavin monoamine oxidase family. In terms of assembly, monomer, homo- or heterodimer (containing two subunits of similar size). Each subunit contains a covalently bound flavin. Enzymatically active as monomer. Requires FAD as cofactor.

The protein localises to the mitochondrion outer membrane. The catalysed reaction is a secondary aliphatic amine + O2 + H2O = a primary amine + an aldehyde + H2O2. The enzyme catalyses a primary methyl amine + O2 + H2O = an aldehyde + H2O2 + NH4(+). It carries out the reaction serotonin + O2 + H2O = (5-hydroxyindol-3-yl)acetaldehyde + H2O2 + NH4(+). It catalyses the reaction (R)-adrenaline + O2 + H2O = (R)-3,4-dihydroxymandelaldehyde + methylamine + H2O2. The catalysed reaction is dopamine + O2 + H2O = 3,4-dihydroxyphenylacetaldehyde + H2O2 + NH4(+). The enzyme catalyses tyramine + O2 + H2O = (4-hydroxyphenyl)acetaldehyde + H2O2 + NH4(+). It carries out the reaction (R)-noradrenaline + O2 + H2O = (R)-3,4-dihydroxymandelaldehyde + H2O2 + NH4(+). It catalyses the reaction kynuramine + O2 + H2O = 3-(2-aminophenyl)-3-oxopropanal + H2O2 + NH4(+). The catalysed reaction is tryptamine + O2 + H2O = indole-3-acetaldehyde + H2O2 + NH4(+). The enzyme catalyses 2-phenylethylamine + O2 + H2O = 2-phenylacetaldehyde + H2O2 + NH4(+). Functionally, catalyzes the oxidative deamination of biogenic and xenobiotic amines and has important functions in the metabolism of neuroactive and vasoactive amines in the central nervous system and peripheral tissues. Preferentially oxidizes serotonin. Also catalyzes the oxidative deamination of kynuramine to 3-(2-aminophenyl)-3-oxopropanal that can spontaneously condense to 4-hydroxyquinoline. This chain is Amine oxidase [flavin-containing] A, found in Mus musculus (Mouse).